A 355-amino-acid polypeptide reads, in one-letter code: Ubiquinone biosynthesis protein COQ4 homolog, mitochondrial (355 aa).

Zn(2+) contacts are provided by His-134, Asp-135, His-138, and Glu-150.

It belongs to the COQ4 family. Component of a multi-subunit COQ enzyme complex. Requires Zn(2+) as cofactor.

The protein localises to the mitochondrion inner membrane. It catalyses the reaction a 4-hydroxy-3-methoxy-5-(all-trans-polyprenyl)benzoate + H(+) = a 2-methoxy-6-(all-trans-polyprenyl)phenol + CO2. It participates in cofactor biosynthesis; ubiquinone biosynthesis. Lyase that catalyzes the C1-decarboxylation of 4-hydroxy-3-methoxy-5-(all-trans-polyprenyl)benzoic acid into 2-methoxy-6-(all-trans-polyprenyl)phenol during ubiquinone biosynthesis. The polypeptide is Ubiquinone biosynthesis protein COQ4 homolog, mitochondrial (Plasmodium yoelii yoelii).